A 366-amino-acid chain; its full sequence is Carbamoyl phosphate synthase small chain (366 aa).

Positions M1–D171 are CPSase. L-glutamine is bound by residues S47, G221, and G223. The Glutamine amidotransferase type-1 domain maps to S173–K360. C248 acts as the Nucleophile in catalysis. Residues L249, Q252, N290, G292, and Y293 each coordinate L-glutamine. Residues H333 and E335 contribute to the active site.

Belongs to the CarA family. In terms of assembly, composed of two chains; the small (or glutamine) chain promotes the hydrolysis of glutamine to ammonia, which is used by the large (or ammonia) chain to synthesize carbamoyl phosphate. Tetramer of heterodimers (alpha,beta)4.

The enzyme catalyses hydrogencarbonate + L-glutamine + 2 ATP + H2O = carbamoyl phosphate + L-glutamate + 2 ADP + phosphate + 2 H(+). The catalysed reaction is L-glutamine + H2O = L-glutamate + NH4(+). Its pathway is amino-acid biosynthesis; L-arginine biosynthesis; carbamoyl phosphate from bicarbonate: step 1/1. The protein operates within pyrimidine metabolism; UMP biosynthesis via de novo pathway; (S)-dihydroorotate from bicarbonate: step 1/3. Functionally, small subunit of the glutamine-dependent carbamoyl phosphate synthetase (CPSase). CPSase catalyzes the formation of carbamoyl phosphate from the ammonia moiety of glutamine, carbonate, and phosphate donated by ATP, constituting the first step of 2 biosynthetic pathways, one leading to arginine and/or urea and the other to pyrimidine nucleotides. The small subunit (glutamine amidotransferase) binds and cleaves glutamine to supply the large subunit with the substrate ammonia. In Staphylococcus epidermidis (strain ATCC 12228 / FDA PCI 1200), this protein is Carbamoyl phosphate synthase small chain.